The following is a 381-amino-acid chain: MPKHPLTIALVAGETSGDILGAGLIRALKEKHPDARFVGVAGPLMQSEGCEAWYEMEELAVMGIVEVLGRLRRLLHIRRDLTRRFTALKPDVFVGIDAPDFNITLEGRLKQQGIRTIHYVSPSVWAWRQKRVFKIGRATDLVLAFLPFEKAFYDRFNVPCRFIGHTMADAMPIVPDKQAARRELGIAPQALCLALLPGSRSAEVEMLSADFLKTAMLLREKYPQLEIVVPLVNPRRRAQFEAIKAEVAADLPMHLLDGKGREAMLASDAALLASGTAALECMLAKCPMVVGYRMKPFTFWLAKRLVKTDYVSLPNLLAGRELVPELLQDECQPQRLAAALEPLLAQGETRDTLLATFAELHHQIRWNADEQAAAAVLELCR.

Belongs to the LpxB family.

The enzyme catalyses 2-N,3-O-bis[(3R)-3-hydroxytetradecanoyl]-alpha-D-glucosaminyl 1-phosphate + UDP-2-N,3-O-bis[(3R)-3-hydroxytetradecanoyl]-alpha-D-glucosamine = lipid A disaccharide (E. coli) + UDP + H(+). It carries out the reaction a lipid X + a UDP-2-N,3-O-bis[(3R)-3-hydroxyacyl]-alpha-D-glucosamine = a lipid A disaccharide + UDP + H(+). It participates in glycolipid biosynthesis; lipid IV(A) biosynthesis; lipid IV(A) from (3R)-3-hydroxytetradecanoyl-[acyl-carrier-protein] and UDP-N-acetyl-alpha-D-glucosamine: step 5/6. Functionally, condensation of UDP-2,3-diacylglucosamine and 2,3-diacylglucosamine-1-phosphate to form lipid A disaccharide, a precursor of lipid A, a phosphorylated glycolipid that anchors the lipopolysaccharide to the outer membrane of the cell. This chain is Lipid-A-disaccharide synthase, found in Erwinia tasmaniensis (strain DSM 17950 / CFBP 7177 / CIP 109463 / NCPPB 4357 / Et1/99).